A 59-amino-acid chain; its full sequence is UPF0434 protein PBPRA2383 (59 aa).

This sequence belongs to the UPF0434 family.

This is UPF0434 protein PBPRA2383 from Photobacterium profundum (strain SS9).